A 346-amino-acid polypeptide reads, in one-letter code: Acrosin (346 aa).

The first 19 residues, 1–19, serve as a signal peptide directing secretion; sequence MALLLPLAVLLAACRPGHG. Disulfide bonds link C24–C146, C27–C154, C70–C86, C168–C240, C203–C219, and C230–C260. The Peptidase S1 domain occupies 41–284; it reads VVGGTEALHG…FYNWILLQVR (244 aa). The active-site Charge relay system is the H85. N-linked (GlcNAc...) asparagine glycosylation is present at N128. The active-site Charge relay system is the D134. N-linked (GlcNAc...) asparagine glycosylation is present at N204. The active-site Charge relay system is S234. The propeptide occupies 266 to 346; sequence PGIYTSTQHF…LLQSLWGSKA (81 aa).

Belongs to the peptidase S1 family. Heavy chain (catalytic) and a light chain linked by two disulfide bonds. Glycosylated.

The enzyme catalyses Preferential cleavage: Arg-|-Xaa, Lys-|-Xaa.. With respect to regulation, inhibited by aprotinin, ovomucoid, soybean trypsin inhibitor, benzamidine, p-aminobenzamidine, and zinc ions. Activity also inhibited by a Kazal-type proteinase inhibitor. Serine protease of trypsin-like cleavage specificity. Synthesized in a zymogen form, proacrosin and stored in the acrosome. This Meleagris gallopavo (Wild turkey) protein is Acrosin.